Consider the following 299-residue polypeptide: MIIPLISDLLALCKLKVVALILLTAEVGMFLAVPAPYLPNGLLVLSASIGISMAAASAAVFNHVVDEQIDAQMSRTNKRPLPQGKVSRNQALMWGVFLGLVGLGILQLFVNTITMVLTFVSLIGYAIIYTLYLKRATPQNIVIGGAAGAAPPVLGWTAVSGTQGIEYACLLFLIVFIWTPPHFWALAIHRVEEYKKVDVPMLPVTHGLAYTRTQILLYTVLLLLVSLLPYLASMSGLIYLVVAIALGIRFLMYAIKIYNNPDDKRIAWCTFVYSINYLMLLFVTLLFDHYWLILPLEVF.

Helical transmembrane passes span Val-17 to Tyr-37, Gly-41 to Phe-61, Ala-91 to Asn-111, Ile-113 to Leu-133, Ile-141 to Gly-161, Ala-168 to Ile-188, Gly-207 to Leu-227, Leu-228 to Ile-248, and Ile-266 to Leu-286.

The protein belongs to the UbiA prenyltransferase family. Protoheme IX farnesyltransferase subfamily.

The protein resides in the cell inner membrane. The enzyme catalyses heme b + (2E,6E)-farnesyl diphosphate + H2O = Fe(II)-heme o + diphosphate. It participates in porphyrin-containing compound metabolism; heme O biosynthesis; heme O from protoheme: step 1/1. In terms of biological role, converts heme B (protoheme IX) to heme O by substitution of the vinyl group on carbon 2 of heme B porphyrin ring with a hydroxyethyl farnesyl side group. This chain is Protoheme IX farnesyltransferase, found in Ruthia magnifica subsp. Calyptogena magnifica.